The following is a 910-amino-acid chain: DNA mismatch repair protein MutS (910 aa).

615 to 622 (GPNMAGKS) lines the ATP pocket.

The protein belongs to the DNA mismatch repair MutS family.

Functionally, this protein is involved in the repair of mismatches in DNA. It is possible that it carries out the mismatch recognition step. This protein has a weak ATPase activity. This chain is DNA mismatch repair protein MutS, found in Clostridium perfringens (strain ATCC 13124 / DSM 756 / JCM 1290 / NCIMB 6125 / NCTC 8237 / Type A).